Reading from the N-terminus, the 316-residue chain is Pantothenate kinase (316 aa).

Residue 95-102 coordinates ATP; it reads GSVAVGKS.

Belongs to the prokaryotic pantothenate kinase family.

It is found in the cytoplasm. It carries out the reaction (R)-pantothenate + ATP = (R)-4'-phosphopantothenate + ADP + H(+). It participates in cofactor biosynthesis; coenzyme A biosynthesis; CoA from (R)-pantothenate: step 1/5. The chain is Pantothenate kinase from Shewanella oneidensis (strain ATCC 700550 / JCM 31522 / CIP 106686 / LMG 19005 / NCIMB 14063 / MR-1).